Reading from the N-terminus, the 290-residue chain is Elongation factor Ts (290 aa).

The interval 87–90 (TDFV) is involved in Mg(2+) ion dislocation from EF-Tu.

This sequence belongs to the EF-Ts family.

The protein resides in the cytoplasm. Associates with the EF-Tu.GDP complex and induces the exchange of GDP to GTP. It remains bound to the aminoacyl-tRNA.EF-Tu.GTP complex up to the GTP hydrolysis stage on the ribosome. This chain is Elongation factor Ts (tsf), found in Treponema pallidum (strain Nichols).